We begin with the raw amino-acid sequence, 213 residues long: Ribonuclease HII (213 aa).

Residues 20–209 (ELVAGVDEVG…VRQAYEALEG (190 aa)) form the RNase H type-2 domain. A divalent metal cation contacts are provided by Asp-26, Glu-27, and Asp-118.

The protein belongs to the RNase HII family. Mn(2+) is required as a cofactor. Mg(2+) serves as cofactor.

The protein resides in the cytoplasm. It catalyses the reaction Endonucleolytic cleavage to 5'-phosphomonoester.. Its function is as follows. Endonuclease that specifically degrades the RNA of RNA-DNA hybrids. The polypeptide is Ribonuclease HII (Pseudomonas fluorescens (strain Pf0-1)).